We begin with the raw amino-acid sequence, 383 residues long: Acetylornithine deacetylase (383 aa).

Zn(2+) is bound at residue His80. Asp82 is a catalytic residue. Residue Asp112 participates in Zn(2+) binding. Glu144 is an active-site residue. The Zn(2+) site is built by Glu145, Glu169, and His355.

Belongs to the peptidase M20A family. ArgE subfamily. In terms of assembly, homodimer. It depends on Zn(2+) as a cofactor. Requires Co(2+) as cofactor. The cofactor is glutathione.

It localises to the cytoplasm. It catalyses the reaction N(2)-acetyl-L-ornithine + H2O = L-ornithine + acetate. It participates in amino-acid biosynthesis; L-arginine biosynthesis; L-ornithine from N(2)-acetyl-L-ornithine (linear): step 1/1. Its function is as follows. Catalyzes the hydrolysis of the amide bond of N(2)-acetylated L-amino acids. Cleaves the acetyl group from N-acetyl-L-ornithine to form L-ornithine, an intermediate in L-arginine biosynthesis pathway, and a branchpoint in the synthesis of polyamines. The sequence is that of Acetylornithine deacetylase from Salmonella typhi.